The primary structure comprises 217 residues: Probable transaldolase (217 aa).

The active-site Schiff-base intermediate with substrate is Lys83.

Belongs to the transaldolase family. Type 3B subfamily.

The protein localises to the cytoplasm. It carries out the reaction D-sedoheptulose 7-phosphate + D-glyceraldehyde 3-phosphate = D-erythrose 4-phosphate + beta-D-fructose 6-phosphate. The protein operates within carbohydrate degradation; pentose phosphate pathway; D-glyceraldehyde 3-phosphate and beta-D-fructose 6-phosphate from D-ribose 5-phosphate and D-xylulose 5-phosphate (non-oxidative stage): step 2/3. Transaldolase is important for the balance of metabolites in the pentose-phosphate pathway. The protein is Probable transaldolase (tal) of Methanocaldococcus jannaschii (strain ATCC 43067 / DSM 2661 / JAL-1 / JCM 10045 / NBRC 100440) (Methanococcus jannaschii).